A 128-amino-acid chain; its full sequence is Pi-hexatoxin-Hi1c (128 aa).

Positions M1–G19 are cleaved as a signal peptide. A propeptide spanning residues D20–R47 is cleaved from the precursor. Disulfide bonds link C54/C69, C61/C74, C68/C84, C93/C108, C100/C113, and C107/C124. 2 Domain repeats span residues C54–C84 and C93–C124. Residues C54–C124 form a 2 X approximate repeats with cysteine pattern C-C-CC-C-C region.

The protein belongs to the psalmotoxin-1 family. Double-knot toxin subfamily. As to expression, expressed by the venom gland.

It localises to the secreted. This toxin potently and selectively inhibits ASIC1a, an isoform of the gene ASIC1. It incompletely inhibits ASIC1a activation in a pH-independent and slowly reversible manner. This toxin acts by binding to and stabilizing the closed state of the channel, thereby impeding the transition into a conducting state. This toxin may bind to the acidic pocket of ASIC1a, since mutation of a key residue of this pocket (Arg-350) abolishes the ability of the toxin to inhibit ASIC1a. In vivo, this toxin protects the brain from neuronal injury when administered up to 8 hours after stroke onset. The sequence is that of Pi-hexatoxin-Hi1c from Hadronyche infensa (Fraser island funnel-web spider).